A 1380-amino-acid polypeptide reads, in one-letter code: DNA-directed RNA polymerase subunit beta (1380 aa).

The protein belongs to the RNA polymerase beta chain family. In terms of assembly, the RNAP catalytic core consists of 2 alpha, 1 beta, 1 beta' and 1 omega subunit. When a sigma factor is associated with the core the holoenzyme is formed, which can initiate transcription.

The enzyme catalyses RNA(n) + a ribonucleoside 5'-triphosphate = RNA(n+1) + diphosphate. Functionally, DNA-dependent RNA polymerase catalyzes the transcription of DNA into RNA using the four ribonucleoside triphosphates as substrates. The protein is DNA-directed RNA polymerase subunit beta of Ehrlichia canis (strain Jake).